Consider the following 361-residue polypeptide: Phosphoserine aminotransferase (361 aa).

S9 and R42 together coordinate L-glutamate. Pyridoxal 5'-phosphate contacts are provided by residues 76–77 (AR), W102, T153, D173, and Q196. Position 197 is an N6-(pyridoxal phosphate)lysine (K197). 238 to 239 (NT) serves as a coordination point for pyridoxal 5'-phosphate.

The protein belongs to the class-V pyridoxal-phosphate-dependent aminotransferase family. SerC subfamily. As to quaternary structure, homodimer. Requires pyridoxal 5'-phosphate as cofactor.

Its subcellular location is the cytoplasm. It catalyses the reaction O-phospho-L-serine + 2-oxoglutarate = 3-phosphooxypyruvate + L-glutamate. The enzyme catalyses 4-(phosphooxy)-L-threonine + 2-oxoglutarate = (R)-3-hydroxy-2-oxo-4-phosphooxybutanoate + L-glutamate. It functions in the pathway amino-acid biosynthesis; L-serine biosynthesis; L-serine from 3-phospho-D-glycerate: step 2/3. It participates in cofactor biosynthesis; pyridoxine 5'-phosphate biosynthesis; pyridoxine 5'-phosphate from D-erythrose 4-phosphate: step 3/5. Catalyzes the reversible conversion of 3-phosphohydroxypyruvate to phosphoserine and of 3-hydroxy-2-oxo-4-phosphonooxybutanoate to phosphohydroxythreonine. The chain is Phosphoserine aminotransferase from Serratia proteamaculans (strain 568).